A 268-amino-acid polypeptide reads, in one-letter code: Mediator of RNA polymerase II transcription subunit 18 (268 aa).

This sequence belongs to the Mediator complex subunit 18 family. Component of the Mediator complex.

The protein localises to the nucleus. Component of the Mediator complex, a coactivator involved in the regulated transcription of nearly all RNA polymerase II-dependent genes. Mediator functions as a bridge to convey information from gene-specific regulatory proteins to the basal RNA polymerase II transcription machinery. Mediator is recruited to promoters by direct interactions with regulatory proteins and serves as a scaffold for the assembly of a functional preinitiation complex with RNA polymerase II and the general transcription factors. In Neosartorya fischeri (strain ATCC 1020 / DSM 3700 / CBS 544.65 / FGSC A1164 / JCM 1740 / NRRL 181 / WB 181) (Aspergillus fischerianus), this protein is Mediator of RNA polymerase II transcription subunit 18 (srb5).